Here is a 105-residue protein sequence, read N- to C-terminus: DNA-directed RNA polymerase subunit omega (105 aa).

Belongs to the RNA polymerase subunit omega family. The RNAP catalytic core consists of 2 alpha, 1 beta, 1 beta' and 1 omega subunit. When a sigma factor is associated with the core the holoenzyme is formed, which can initiate transcription.

The enzyme catalyses RNA(n) + a ribonucleoside 5'-triphosphate = RNA(n+1) + diphosphate. Its function is as follows. Promotes RNA polymerase assembly. Latches the N- and C-terminal regions of the beta' subunit thereby facilitating its interaction with the beta and alpha subunits. The protein is DNA-directed RNA polymerase subunit omega of Streptococcus equi subsp. equi (strain 4047).